Here is a 371-residue protein sequence, read N- to C-terminus: 43 kDa relaxation protein (371 aa).

5 disordered regions span residues 1 to 46 (MASY…GNMP), 150 to 172 (KEPDAVAQKRHVSGKHRPNAKNT), 196 to 221 (RVDSRSLKAQGIDREPERHLGAGQVQ), 263 to 291 (SERDTLTLKQELKSEPEQESHSGRTFDFE), and 328 to 371 (IHQE…SFSR). Positions 22–42 (YIAREGKYAREKDSDLEHKES) are enriched in basic and acidic residues. The span at 157–168 (QKRHVSGKHRPN) shows a compositional bias: basic residues. Basic and acidic residues predominate over residues 196-215 (RVDSRSLKAQGIDREPERHL). Positions 330–365 (QEMERQRERERLAEKQRQQEKERQRLAEQIRQKPDK) are enriched in basic and acidic residues.

Belongs to the MobA/MobL family.

In terms of biological role, this protein is probably required for relaxation complex formation. The polypeptide is 43 kDa relaxation protein (Salmonella typhimurium).